Consider the following 288-residue polypeptide: uncharacterized protein (288 aa).

This is an uncharacterized protein from Ictaluridae (bullhead catfishes).